Here is an 879-residue protein sequence, read N- to C-terminus: Pentatricopeptide repeat-containing protein At1g71210, mitochondrial (879 aa).

Residues 1–44 (MLRCWSVTVERSCEGMLLRRRILSLSASSFRNFTSGNNGDAIPF) constitute a mitochondrion transit peptide. 16 PPR repeats span residues 181–215 (SLRLCDALVVGYAVAGRTDIALQHFGNMRFRGLDL), 216–246 (DSFGYHVLLNALVEEKCFDSFDVIFDQISVR), 250–280 (CAVTHSILVKKFCKQGKLDEAEDYLRALLPN), 285–319 (CGSGLGILVDALCSKRKFQEATKLLDEIKLVGTVN), 320–355 (MDRAYNIWIRALIKAGFLNNPADFLQKISPLEGCEL), 356–390 (EVFRYNSMVFQLLKENNLDGVYDILTEMMVRGVSP), 391–425 (NKKTMNAALCFFCKAGFVDEALELYRSRSEIGFAP), 426–460 (TAMSYNYLIHTLCANESVEQAYDVLKGAIDRGHFL), 461–495 (GGKTFSTLTNALCWKGKPDMARELVIAAAERDLLP), 496–530 (KRIAGCKIISALCDVGKVEDALMINELFNKSGVDT), 531–565 (SFKMFTSLIYGSITLMRGDIAAKLIIRMQEKGYTP), 566–597 (TRSLYRNVIQCVCEMESGEKNFFTTLLKFQLS), 602–636 (KVQAYNLFIEGAGFAGKPKLARLVYDMMDRDGITP), 637–667 (TVASNILMLQSYLKNEKIADALHFFHDLREQ), 671–705 (KKRLYQVMIVGLCKANKLDDAMHFLEEMKGEGLQP), and 706–740 (SIECYEVNIQKLCNEEKYDEAVGLVNEFRKSGRRI).

This sequence belongs to the PPR family. P subfamily.

It is found in the mitochondrion. This chain is Pentatricopeptide repeat-containing protein At1g71210, mitochondrial, found in Arabidopsis thaliana (Mouse-ear cress).